The following is a 272-amino-acid chain: Phosphatidylglycerol--prolipoprotein diacylglyceryl transferase (272 aa).

The next 7 membrane-spanning stretches (helical) occupy residues 17-37 (LQVH…WGLA), 55-75 (LVFY…VLFY), 90-110 (VWTG…AMLF), 125-145 (FIAP…FIGG), 174-194 (PSQI…LWWF), 202-222 (MAVS…MEFF), and 230-250 (GFIL…MLLI). Arg-138 is an a 1,2-diacyl-sn-glycero-3-phospho-(1'-sn-glycerol) binding site.

This sequence belongs to the Lgt family.

Its subcellular location is the cell inner membrane. The catalysed reaction is L-cysteinyl-[prolipoprotein] + a 1,2-diacyl-sn-glycero-3-phospho-(1'-sn-glycerol) = an S-1,2-diacyl-sn-glyceryl-L-cysteinyl-[prolipoprotein] + sn-glycerol 1-phosphate + H(+). It functions in the pathway protein modification; lipoprotein biosynthesis (diacylglyceryl transfer). In terms of biological role, catalyzes the transfer of the diacylglyceryl group from phosphatidylglycerol to the sulfhydryl group of the N-terminal cysteine of a prolipoprotein, the first step in the formation of mature lipoproteins. The chain is Phosphatidylglycerol--prolipoprotein diacylglyceryl transferase from Acinetobacter baumannii (strain SDF).